The chain runs to 357 residues: Putative minor fimbrial subunit PmfE (357 aa).

The signal sequence occupies residues 1 to 28; the sequence is MILNKKNIHSKSVMLFCAGIVSLMPLHA.

It is found in the fimbrium. This chain is Putative minor fimbrial subunit PmfE (pmfE), found in Proteus mirabilis (strain HI4320).